A 301-amino-acid polypeptide reads, in one-letter code: MAPMNPPRLQRFPATASADQIFAAFKEDGCVVIEGFIPPDQVARFSQEVNPAMEKITVEVTNDGNSNDRTKRFSKCAIASPTFRNEIIESDLMHELCDRIFSNPGEGMGYHFNDTMVIEVQPGAPAQRLHRDQELYPWWNSMGPAGPECIMNFFCAVTPFTEENGATRLAPGSHLWPEFTQINERDCPQFGKIETAPAIMQPGDCYLMSGKVVHGAGHNTTTTDQRRALALSIIRRELRPVQAFSLSVPMKLAREMSERSQTMFGFRSAVQHCDGDMVHFWGNDGKDIAHHLGLEAPSVHI.

Substrate-binding residues include Arg72 and Gln127. Positions 130 and 132 each coordinate Fe cation. Substrate is bound at residue Thr167. His214 contributes to the Fe cation binding site. Residue Arg226 coordinates substrate.

This sequence belongs to the PhyH family. As to quaternary structure, homodimer. Fe cation serves as cofactor.

It carries out the reaction preaustinoid A1 + 2-oxoglutarate + O2 = preaustinoid A2 + succinate + CO2 + H2O. The enzyme catalyses preaustinoid A2 + 2-oxoglutarate + O2 = preaustinoid A3 + succinate + CO2 + H2O. It catalyses the reaction berkeleyone A + 2-oxoglutarate + O2 = preaustinoid A + succinate + CO2 + H2O. The protein operates within secondary metabolite biosynthesis; terpenoid biosynthesis. In terms of biological role, multifunctional dioxygenase; part of the gene cluster A that mediates the biosynthesis of the fungal meroterpenoid acetoxydehydroaustin. The first step of the pathway is the synthesis of 3,5-dimethylorsellinic acid by the polyketide synthase ausA. 3,5-dimethylorsellinic acid is then prenylated by the polyprenyl transferase ausN. Further epoxidation by the FAD-dependent monooxygenase ausM and cyclization by the probable terpene cyclase ausL lead to the formation of protoaustinoid A. Protoaustinoid A is then oxidized to spiro-lactone preaustinoid A3 by the combined action of the FAD-binding monooxygenases ausB and ausC, and the dioxygenase ausE. Acid-catalyzed keto-rearrangement and ring contraction of the tetraketide portion of preaustinoid A3 by ausJ lead to the formation of preaustinoid A4. The aldo-keto reductase ausK, with the help of ausH, is involved in the next step by transforming preaustinoid A4 into isoaustinone which is in turn hydroxylated by the P450 monooxygenase ausI to form austinolide. The cytochrome P450 monooxygenase ausG then modifies austinolide to austinol. Austinol is further acetylated to austin by the O-acetyltransferase ausP, which spontaneously changes to dehydroaustin. The cytochrome P450 monooxygenase then converts dehydroaustin is into 7-dehydrodehydroaustin. The hydroxylation catalyzed by ausR permits the second O-acetyltransferase ausQ to add an additional acetyl group to the molecule, leading to the formation of acetoxydehydroaustin. Due to genetic rearrangements of the clusters and the subsequent loss of some enzymes, the end product of the Penicillium brasilianum austinoid biosynthesis clusters is acetoxydehydroaustin. The protein is Multifunctional dioxygenase ausE of Penicillium brasilianum.